Consider the following 127-residue polypeptide: S-adenosylmethionine decarboxylase proenzyme (127 aa).

The active-site Schiff-base intermediate with substrate; via pyruvic acid is Ser63. The residue at position 63 (Ser63) is a Pyruvic acid (Ser); by autocatalysis. The active-site Proton acceptor; for processing activity is the His68. Cys83 (proton donor; for catalytic activity) is an active-site residue.

Belongs to the prokaryotic AdoMetDC family. Type 1 subfamily. Heterotetramer of two alpha and two beta chains arranged as a dimer of alpha/beta heterodimers. Pyruvate is required as a cofactor. Post-translationally, is synthesized initially as an inactive proenzyme. Formation of the active enzyme involves a self-maturation process in which the active site pyruvoyl group is generated from an internal serine residue via an autocatalytic post-translational modification. Two non-identical subunits are generated from the proenzyme in this reaction, and the pyruvate is formed at the N-terminus of the alpha chain, which is derived from the carboxyl end of the proenzyme. The post-translation cleavage follows an unusual pathway, termed non-hydrolytic serinolysis, in which the side chain hydroxyl group of the serine supplies its oxygen atom to form the C-terminus of the beta chain, while the remainder of the serine residue undergoes an oxidative deamination to produce ammonia and the pyruvoyl group blocking the N-terminus of the alpha chain.

The catalysed reaction is S-adenosyl-L-methionine + H(+) = S-adenosyl 3-(methylsulfanyl)propylamine + CO2. It functions in the pathway amine and polyamine biosynthesis; S-adenosylmethioninamine biosynthesis; S-adenosylmethioninamine from S-adenosyl-L-methionine: step 1/1. In terms of biological role, catalyzes the decarboxylation of S-adenosylmethionine to S-adenosylmethioninamine (dcAdoMet), the propylamine donor required for the synthesis of the polyamines spermine and spermidine from the diamine putrescine. In Carboxydothermus hydrogenoformans (strain ATCC BAA-161 / DSM 6008 / Z-2901), this protein is S-adenosylmethionine decarboxylase proenzyme.